A 305-amino-acid chain; its full sequence is U6 small nuclear RNA (adenine-(43)-N(6))-methyltransferase (305 aa).

S-adenosyl-L-methionine contacts are provided by arginine 85, glycine 110, glutamate 133, serine 164, and asparagine 186. The interval 194–217 is disordered; sequence SPNPFGGNTRNPQRRPAPNNVRTG.

The protein belongs to the methyltransferase superfamily. METTL16/RlmF family.

The enzyme catalyses adenosine in U6 snRNA + S-adenosyl-L-methionine = N(6)-methyladenosine in U6 snRNA + S-adenosyl-L-homocysteine + H(+). In terms of biological role, RNA N6-methyltransferase that mediates N6-methylation of adenine of U6 small nuclear RNA (U6 snRNA). In Drosophila pseudoobscura pseudoobscura (Fruit fly), this protein is U6 small nuclear RNA (adenine-(43)-N(6))-methyltransferase.